We begin with the raw amino-acid sequence, 103 residues long: N(4)-acetylcytidine amidohydrolase (103 aa).

Residues 6–101 (ITFSQRFQDD…QTQFYVIEFK (96 aa)) enclose the ASCH domain. Lysine 21 acts as the Proton acceptor in catalysis. Catalysis depends on threonine 24, which acts as the Nucleophile. Glutamate 74 acts as the Proton donor in catalysis.

It belongs to the N(4)-acetylcytidine amidohydrolase family.

It catalyses the reaction N(4)-acetylcytidine + H2O = cytidine + acetate + H(+). It carries out the reaction N(4)-acetyl-2'-deoxycytidine + H2O = 2'-deoxycytidine + acetate + H(+). The enzyme catalyses N(4)-acetylcytosine + H2O = cytosine + acetate + H(+). Functionally, catalyzes the hydrolysis of N(4)-acetylcytidine (ac4C). This chain is N(4)-acetylcytidine amidohydrolase (yqfB), found in Shigella boydii serotype 4 (strain Sb227).